The chain runs to 251 residues: Probable transcriptional regulatory protein Caul_0780 (251 aa).

Belongs to the TACO1 family.

Its subcellular location is the cytoplasm. In Caulobacter sp. (strain K31), this protein is Probable transcriptional regulatory protein Caul_0780.